Reading from the N-terminus, the 93-residue chain is Early nodulin-36B (93 aa).

This chain is Early nodulin-36B, found in Glycine max (Soybean).